Reading from the N-terminus, the 155-residue chain is Endoribonuclease YbeY (155 aa).

H117, H121, and H127 together coordinate Zn(2+).

Belongs to the endoribonuclease YbeY family. The cofactor is Zn(2+).

The protein localises to the cytoplasm. In terms of biological role, single strand-specific metallo-endoribonuclease involved in late-stage 70S ribosome quality control and in maturation of the 3' terminus of the 16S rRNA. In Treponema denticola (strain ATCC 35405 / DSM 14222 / CIP 103919 / JCM 8153 / KCTC 15104), this protein is Endoribonuclease YbeY.